A 444-amino-acid chain; its full sequence is Pestheic acid cluster transcriptional regulator 2 (444 aa).

Residues 1–22 (MEAADPNNNLTITSPSTLLSNP) show a composition bias toward polar residues. Residues 1 to 31 (MEAADPNNNLTITSPSTLLSNPTQPPAQPLK) are disordered. The zn(2)-C6 fungal-type DNA-binding region spans 36–63 (CHACASSKVKCHKEKPTCSRCRKRGITC). The tract at residues 326-348 (ARVGSGVSTHTTAGQYEPQVEQQ) is disordered. Positions 331–348 (GVSTHTTAGQYEPQVEQQ) are enriched in polar residues.

It is found in the nucleus. In terms of biological role, transcription factor that, with ptaR1 and ptaR3, coregulates the expression of the gene cluster that mediates the biosynthesis of pestheic acid, a diphenyl ether which is a biosynthetic precursor of the unique chloropupukeananes. The chain is Pestheic acid cluster transcriptional regulator 2 from Pestalotiopsis fici (strain W106-1 / CGMCC3.15140).